The chain runs to 57 residues: Conotoxin Cal6.39 (57 aa).

The signal sequence occupies residues 1 to 18 (MSGTTVLLLTCLFLVTMA). 3 disulfide bridges follow: Cys-22–Cys-36, Cys-29–Cys-46, and Cys-35–Cys-52.

In terms of tissue distribution, expressed by the venom duct.

The protein localises to the secreted. In terms of biological role, probable neurotoxin. The sequence is that of Conotoxin Cal6.39 from Californiconus californicus (California cone).